The following is a 1227-amino-acid chain: JNK-interacting protein 3 (1227 aa).

Residues 1–22 (MMDNDDALLNNGGPQSGAETVY) form a disordered region. The RH1 domain maps to 25-113 (EDNNMVMSEK…VTQYEREKSA (89 aa)). A coiled-coil region spans residues 84–191 (RINQEQDVEV…TELFKNHVDY (108 aa)). The interval 281-323 (DALQQQHHATSPQSPDSSPVVPNVPTNVGRSTTKKEQRSDNNL) is disordered. The segment covering 290 to 308 (TSPQSPDSSPVVPNVPTNV) has biased composition (low complexity). A coiled-coil region spans residues 363–489 (GKEVENLIME…EAVRLTEILR (127 aa)). Residues 453–524 (RKRFTRVEMA…PSNRPTERVA (72 aa)) enclose the RH2 domain. Disordered regions lie at residues 517–572 (NRPT…HPAS), 804–851 (GKVE…AEEP), and 863–889 (PLPGAPQRLSTDGNQTNNNNNSSSSSN). The segment covering 526–540 (GLGGGPMFRHTGGGS) has biased composition (gly residues). The segment covering 541 to 550 (PAHSHGSPSR) has biased composition (low complexity). Positions 807–817 (EFVRVKPKSDD) are enriched in basic and acidic residues. Residues 814–849 (KSDDEQNSNEKQQQEEEEAKEATEKSNEQLPAVSAE) adopt a coiled-coil conformation. A compositionally biased stretch (low complexity) spans 879-889 (NNNNNSSSSSN).

It belongs to the JIP scaffold family. As to quaternary structure, forms homo- and heterooligomeric complexes. Binds the TPR motif-containing C-terminal of kinesin light chain, Klc. Pre-assembled syd scaffolding complexes are then transported as a cargo of kinesin, to the required subcellular location.

Its subcellular location is the cytoplasm. In terms of biological role, the JNK-interacting protein (JIP) group of scaffold proteins selectively mediates JNK-signaling by aggregating specific components of the MAPK cascade to form a functional JNK signaling module. May function as a regulator of vesicle transport, through interactions with the JNK-signaling components and motor proteins. Syd is required for efficient kinesin-I mediated axonal transport. This chain is JNK-interacting protein 3 (syd), found in Drosophila melanogaster (Fruit fly).